We begin with the raw amino-acid sequence, 502 residues long: Glycerol kinase (502 aa).

Thr14 serves as a coordination point for ADP. 3 residues coordinate ATP: Thr14, Thr15, and Ser16. Thr14 is a binding site for sn-glycerol 3-phosphate. Arg18 is a binding site for ADP. Sn-glycerol 3-phosphate-binding residues include Arg84, Glu85, and Tyr136. The glycerol site is built by Arg84, Glu85, and Tyr136. His232 is subject to Phosphohistidine; by HPr. Asp246 is a sn-glycerol 3-phosphate binding site. 2 residues coordinate glycerol: Asp246 and Gln247. Thr268 and Gly311 together coordinate ADP. 4 residues coordinate ATP: Thr268, Gly311, Gln315, and Gly412. 2 residues coordinate ADP: Gly412 and Asn416.

The protein belongs to the FGGY kinase family. In terms of assembly, homotetramer and homodimer (in equilibrium). In terms of processing, the phosphoenolpyruvate-dependent sugar phosphotransferase system (PTS), including enzyme I, and histidine-containing protein (HPr) are required for the phosphorylation, which leads to the activation of the enzyme.

It carries out the reaction glycerol + ATP = sn-glycerol 3-phosphate + ADP + H(+). It functions in the pathway polyol metabolism; glycerol degradation via glycerol kinase pathway; sn-glycerol 3-phosphate from glycerol: step 1/1. Activated by phosphorylation and inhibited by fructose 1,6-bisphosphate (FBP). In terms of biological role, key enzyme in the regulation of glycerol uptake and metabolism. Catalyzes the phosphorylation of glycerol to yield sn-glycerol 3-phosphate. The sequence is that of Glycerol kinase from Streptococcus pneumoniae serotype 2 (strain D39 / NCTC 7466).